The sequence spans 451 residues: UPF0210 protein Asuc_1169 (451 aa).

This sequence belongs to the UPF0210 family. In terms of assembly, homodimer.

The sequence is that of UPF0210 protein Asuc_1169 from Actinobacillus succinogenes (strain ATCC 55618 / DSM 22257 / CCUG 43843 / 130Z).